The sequence spans 582 residues: Ubiquilin-1 (582 aa).

2 disordered regions span residues 1–26 (MAES…AEPK) and 102–136 (RPQD…AANS). At alanine 2 the chain carries N-acetylalanine. Positions 28 to 102 (MKVTVKTPKE…VHLVIKTQNR (75 aa)) constitute a Ubiquitin-like domain. The segment covering 102–135 (RPQDNSAQQTNTTGNSVTSSPAPDSNPTSGPAAN) has biased composition (polar residues). An interaction with UBXN4 region spans residues 169–422 (QLLSNPEMMV…LNNPLFAGNP (254 aa)). STI1 domains are found at residues 173-201 (NPEM…QLIM) and 203-242 (NPQM…MQEM). The interval 285 to 365 (NPFASLVSSP…NLVPGAGASM (81 aa)) is disordered. Positions 290–304 (LVSSPSSAEGTQPSR) are enriched in polar residues. Over residues 318–346 (QTPQSSPASGSTGSTTNTVSTSAGNATST) the composition is skewed to low complexity. STI1 domains are found at residues 381–428 (NPQL…QEQM) and 432–464 (LPTF…QQGL). The interval 481 to 513 (GLAAGNSGGPAGTTAPSTAPGEDTNPQGGAAEP) is disordered. One can recognise a UBA domain in the interval 539-579 (RFQQQLEQLSAMGFLNREANLQALIATGGDINAAIERLLGS).

In terms of assembly, monomer and homodimer. Heterodimer with UBQLN2. Binds CD47. Binds NBL1. Binds GABRA1, GABRA2, GABRA3, GABRA6, GABRB1, GABRB2 and GABRB3. Binds UBE3A, BTRC, P4HB and MTOR. Interacts with the proteasome 19S subunit. Interacts (via ubiquitin-like domain) with TREX1; the interaction is direct and may control TREX1 subcellular location. Forms a complex with UBXN4 and VCP. Interacts (via UBA domain) with UBQLN4 (via ubiquitin-like domain). Found in a complex with UBQLN2 and MAP1LC3A/B/C. The monomeric form interacts with PSEN1 and PSEN2. Interacts with ORAI1. Interacts (via UBA domain) with TICAM1. Interacts with EPS15. Interacts (via UBA domain) with UBA52 and (via ubiquitin-like domain) with PSMD3 and PSMD4. Interacts with HERPUD1. Interacts with MAP1LC3A/B/C in the presence of UBQLN4. Interacts (via ubiquitin-like domain) with EPS15 (via UIM domains) and both the ubiquitinated and non-ubiquitinated forms can interact with EPS15. Interacts (via ubiquitin-like domain) with EPS15L1, HGS (via UIM domain) and STAM2 (via UIM domain). Interacts with BCL2L10/BCL-B; in the cytoplasm. Degraded during both macroautophagy and during chaperone-mediated autophagy (CMA). In terms of processing, phosphorylated. Post-translationally, ubiquitinated.

Its subcellular location is the nucleus. It localises to the cytoplasm. It is found in the endoplasmic reticulum. The protein resides in the cytoplasmic vesicle. The protein localises to the autophagosome. Its subcellular location is the cell membrane. Functionally, plays an important role in the regulation of different protein degradation mechanisms and pathways including ubiquitin-proteasome system (UPS), autophagy and endoplasmic reticulum-associated protein degradation (ERAD) pathway. Mediates the proteasomal targeting of misfolded or accumulated proteins for degradation by binding (via UBA domain) to their polyubiquitin chains and by interacting (via ubiquitin-like domain) with the subunits of the proteasome. Plays a role in the ERAD pathway via its interaction with ER-localized proteins UBXN4, VCP and HERPUD1 and may form a link between the polyubiquitinated ERAD substrates and the proteasome. Plays a role in unfolded protein response (UPR) by attenuating the induction of UPR-inducible genes, DDTI3/CHOP, HSPA5 and PDIA2 during ER stress. Involved in the regulation of macroautophagy and autophagosome formation; required for maturation of autophagy-related protein LC3 from the cytosolic form LC3-I to the membrane-bound form LC3-II and may assist in the maturation of autophagosomes to autolysosomes by mediating autophagosome-lysosome fusion. Negatively regulates the TICAM1/TRIF-dependent toll-like receptor signaling pathway by decreasing the abundance of TICAM1 via the autophagic pathway. Promotes the ubiquitination and lysosomal degradation of ORAI1, consequently down-regulating the ORAI1-mediated Ca2+ mobilization. Suppresses the maturation and proteasomal degradation of amyloid beta A4 protein (A4) by stimulating the lysine 63 (K63)-linked polyubiquitination. Delays the maturation of A4 by sequestering it in the Golgi apparatus and preventing its transport to the cell surface for subsequent processing. Promotes the surface expression of GABA-A receptors. Ubiquitinates BCL2L10 and thereby stabilizes protein abundance. This chain is Ubiquilin-1 (Ubqln1), found in Rattus norvegicus (Rat).